The following is an 81-amino-acid chain: MAHSVKIYDTCIGCTQCVRACPTDVLEMVPWDGCRANQIASAPRTEDCVGCKRCESACPTDFLSVRVYLGAETTRSMGLAY.

2 consecutive 4Fe-4S ferredoxin-type domains span residues alanine 2–tryptophan 31 and isoleucine 39–tyrosine 68. 8 residues coordinate [4Fe-4S] cluster: cysteine 11, cysteine 14, cysteine 17, cysteine 21, cysteine 48, cysteine 51, cysteine 54, and cysteine 58.

As to quaternary structure, the eukaryotic PSI reaction center is composed of at least 11 subunits. It depends on [4Fe-4S] cluster as a cofactor.

It localises to the plastid. Its subcellular location is the chloroplast thylakoid membrane. The enzyme catalyses reduced [plastocyanin] + hnu + oxidized [2Fe-2S]-[ferredoxin] = oxidized [plastocyanin] + reduced [2Fe-2S]-[ferredoxin]. In terms of biological role, apoprotein for the two 4Fe-4S centers FA and FB of photosystem I (PSI); essential for photochemical activity. FB is the terminal electron acceptor of PSI, donating electrons to ferredoxin. The C-terminus interacts with PsaA/B/D and helps assemble the protein into the PSI complex. Required for binding of PsaD and PsaE to PSI. PSI is a plastocyanin-ferredoxin oxidoreductase, converting photonic excitation into a charge separation, which transfers an electron from the donor P700 chlorophyll pair to the spectroscopically characterized acceptors A0, A1, FX, FA and FB in turn. The sequence is that of Photosystem I iron-sulfur center from Chlorokybus atmophyticus (Soil alga).